We begin with the raw amino-acid sequence, 460 residues long: Allantoinase (460 aa).

Positions 70, 72, 157, 193, 250, and 323 each coordinate Zn(2+). Lysine 157 is subject to N6-carboxylysine.

The protein belongs to the metallo-dependent hydrolases superfamily. Allantoinase family. As to quaternary structure, homotetramer. The cofactor is Zn(2+). In terms of processing, carboxylation allows a single lysine to coordinate two zinc ions.

It catalyses the reaction (S)-allantoin + H2O = allantoate + H(+). Its pathway is nitrogen metabolism; (S)-allantoin degradation; allantoate from (S)-allantoin: step 1/1. Catalyzes the conversion of allantoin (5-ureidohydantoin) to allantoic acid by hydrolytic cleavage of the five-member hydantoin ring. Involved in the utilization of purines as secondary nitrogen sources, when primary sources are limiting. This Saccharomyces cerevisiae (strain ATCC 204508 / S288c) (Baker's yeast) protein is Allantoinase (DAL1).